The primary structure comprises 300 residues: MHMFPLGVVEDSDPPGPPIGRASGSPPPGAGRSTAKPEELLKEATEANIVVRRTAGLNEKLAFHNNTPPTLPTPRRKAPTTGSVLNANQACNAVNLAPLDTPQRFRAVYMSITRPLDNGYYTVPRRMLEFRSVNAVAFNLLVTLRIDKAIGPGKIIDNAEQLPEATFMVHIGDFRRKKSEVYSADYCKMKIEKMGLVFALGGIGGTSLHTRSTGKMSKTLHAQLGFKKTSCYPPMDINEDLNRLLWRSRCKIVRIQAVLQPSVPQELRIYDDVIINDDQGVFKVLQTVVPSNARKRPPSQ.

Residues 1-36 are disordered; that stretch reads MHMFPLGVVEDSDPPGPPIGRASGSPPPGAGRSTAK.

As to quaternary structure, homodimer. Dimerization is critical for virion formation. Interacts with host ANP32B.

It localises to the virion. Its subcellular location is the host cell membrane. Its function is as follows. The M protein has a crucial role in virus assembly and interacts with the RNP complex as well as with the viral membrane. Associates with phosphatidylserine (PS) and phosphatidylinositol 4,5-bisphosphate (PIP2) at the plasma membrane. Interaction with PIP2 triggers matrix protein lattice polymerization. Matrix proteins induce host membrane deformation and curvature necessary for virion assembly/budding. This is Matrix protein (M) from Measles virus (strain Yamagata-1) (MeV).